We begin with the raw amino-acid sequence, 89 residues long: Small ribosomal subunit protein bS18 (89 aa).

The span at 1-15 (MTTANTNETAAAAAA) shows a compositional bias: low complexity. Positions 1–22 (MTTANTNETAAAAAAKNRRNKK) are disordered.

The protein belongs to the bacterial ribosomal protein bS18 family. Part of the 30S ribosomal subunit. Forms a tight heterodimer with protein bS6.

Its function is as follows. Binds as a heterodimer with protein bS6 to the central domain of the 16S rRNA, where it helps stabilize the platform of the 30S subunit. The chain is Small ribosomal subunit protein bS18 from Caldanaerobacter subterraneus subsp. tengcongensis (strain DSM 15242 / JCM 11007 / NBRC 100824 / MB4) (Thermoanaerobacter tengcongensis).